A 196-amino-acid chain; its full sequence is Late protein I196L (196 aa).

2 tandem repeats follow at residues 28 to 48 (SNYL…PTTS) and 49 to 70 (SNYL…TTTS). The 3; approximate repeat unit spans residues 71 to 92 (SNYLTSAIPNIISDKEDDTPFS).

This sequence belongs to the asfivirus I196L family.

This is Late protein I196L from African swine fever virus (strain Badajoz 1971 Vero-adapted) (Ba71V).